The sequence spans 934 residues: MVPEAWRSGLVSTGRVVGVLLLLGALNKASTVIHYEIPEEREKGFAVGNVVANLGLDLGSLSARRFRVVSGASRRFFEVNRETGEMFVNDRLDREELCGTLPSCTVTLELVVENPLELFSVEVVIQDINDNNPAFPTQEMKLEISEAVAPGTRFPLESAHDPDVGSNSLQTYELSRNEYFALRVQTREDSTKYAELVLERALDREREPSLQLVLTALDGGTPALSASLPIHIKVLDANDNAPVFNQSLYRARVLEDAPSGTRVVQVLATDLDEGPNGEIIYSFGSHNRAGVRELFALDLVTGMLTIKGRLDFEDTKLHEIYIQAKDKGANPEGAHCKVLVEVVDVNDNAPEITVTSVYSPVPEDAPLGTVIALLSVTDLDAGENGLVTCEVPPGLPFSLTSSLKNYFTLKTSADLDRETVPEYNLSITARDAGTPSLSALTIVRVQVSDINDNPPQSSQSSYDVYIEENNLPGAPILNLSVWDPDAPQNARLSFFLLEQGAETGLVGRYFTINRDNGIVSSLVPLDYEDRREFELTAHISDGGTPVLATNISVNIFVTDRNDNAPQVLYPRPGGSSVEMLPRGTSAGHLVSRVVGWDADAGHNAWLSYSLLGSPNQSLFAIGLHTGQISTARPVQDTDSPRQTLTVLIKDNGEPSLSTTATLTVSVTEDSPEARAEFPSGSAPREQNKNLTFYLLLSLILVSVGFVVTVFGVIIFKVYKWKQSRDLYRAPVSSLYRTPGPSLHADAVRGGLMSPHLYHQVYLTTDSRRSDPLLKKPGAASPLASRQNTLRSCDPVFYRQVLGAESAPPGQQAPPNTDWRFSQAQRPGTSGSQNGDDTGTWPNNQFDTEMLQAMILASASEAADGSSTLGGGAGTMGLSARYGPQFTLQHVPDYRQNVYIPGSNATLTNAAGKRDGKAPAGGNGNKKKSGKKEKK.

A signal peptide spans 1–31; sequence MVPEAWRSGLVSTGRVVGVLLLLGALNKAST. 6 consecutive Cadherin domains span residues 32–135, 136–244, 245–352, 353–457, 458–567, and 572–685; these read VIHY…NPAF, PTQE…APVF, NQSL…APEI, TVTS…PPQS, SQSS…APQV, and PGGS…APRE. The Extracellular segment spans residues 32–693; the sequence is VIHYEIPEER…REQNKNLTFY (662 aa). N245, N424, N478, N550, N615, and N689 each carry an N-linked (GlcNAc...) asparagine glycan. Residues 694-714 form a helical membrane-spanning segment; that stretch reads LLLSLILVSVGFVVTVFGVII. Residues 715 to 934 are Cytoplasmic-facing; that stretch reads FKVYKWKQSR…KKKSGKKEKK (220 aa). 2 disordered regions span residues 804–843 and 904–934; these read ESAPPGQQAPPNTDWRFSQAQRPGTSGSQNGDDTGTWPNN and ATLTNAAGKRDGKAPAGGNGNKKKSGKKEKK. A compositionally biased stretch (polar residues) spans 812–843; that stretch reads APPNTDWRFSQAQRPGTSGSQNGDDTGTWPNN. Basic residues predominate over residues 924 to 934; that stretch reads NKKKSGKKEKK.

The protein resides in the cell membrane. Its function is as follows. Potential calcium-dependent cell-adhesion protein. May be involved in the establishment and maintenance of specific neuronal connections in the brain. The chain is Protocadherin gamma-C3 (PCDHGC3) from Pan troglodytes (Chimpanzee).